A 570-amino-acid chain; its full sequence is Methionine--tRNA ligase (570 aa).

A 'HIGH' region motif is present at residues 11–21 (PYVQTVPHLGN). Zn(2+) contacts are provided by C143, C146, C156, and C159. The short motif at 333–337 (KFSKS) is the 'KMSKS' region element. K336 lines the ATP pocket.

Belongs to the class-I aminoacyl-tRNA synthetase family. MetG type 1 subfamily. The cofactor is Zn(2+).

It localises to the cytoplasm. It carries out the reaction tRNA(Met) + L-methionine + ATP = L-methionyl-tRNA(Met) + AMP + diphosphate. Is required not only for elongation of protein synthesis but also for the initiation of all mRNA translation through initiator tRNA(fMet) aminoacylation. This is Methionine--tRNA ligase from Pyrobaculum calidifontis (strain DSM 21063 / JCM 11548 / VA1).